A 276-amino-acid polypeptide reads, in one-letter code: Glutamate 5-kinase (276 aa).

Lys14 contacts ATP. Residues Ser54, Asp141, and Asn157 each contribute to the substrate site. Residues 177-178 (SD) and 219-225 (TGGMLTK) contribute to the ATP site.

It belongs to the glutamate 5-kinase family.

Its subcellular location is the cytoplasm. The catalysed reaction is L-glutamate + ATP = L-glutamyl 5-phosphate + ADP. The protein operates within amino-acid biosynthesis; L-proline biosynthesis; L-glutamate 5-semialdehyde from L-glutamate: step 1/2. Catalyzes the transfer of a phosphate group to glutamate to form L-glutamate 5-phosphate. The protein is Glutamate 5-kinase of Listeria monocytogenes serovar 1/2a (strain ATCC BAA-679 / EGD-e).